The following is a 307-amino-acid chain: Protoheme IX farnesyltransferase (307 aa).

The next 9 helical transmembrane spans lie at 31-51 (VTQL…PGMV), 55-75 (VLIG…AINC), 103-123 (TLVF…VYAN), 125-145 (LTMW…TILL), 153-173 (IVIG…AVAG), 179-199 (AWFL…ALAL), 223-243 (LLHI…PFVY), 246-266 (SGYI…AYAW), and 285-305 (ILYL…KFVP).

The protein belongs to the UbiA prenyltransferase family. Protoheme IX farnesyltransferase subfamily.

Its subcellular location is the cell inner membrane. The enzyme catalyses heme b + (2E,6E)-farnesyl diphosphate + H2O = Fe(II)-heme o + diphosphate. Its pathway is porphyrin-containing compound metabolism; heme O biosynthesis; heme O from protoheme: step 1/1. In terms of biological role, converts heme B (protoheme IX) to heme O by substitution of the vinyl group on carbon 2 of heme B porphyrin ring with a hydroxyethyl farnesyl side group. The sequence is that of Protoheme IX farnesyltransferase from Cupriavidus necator (strain ATCC 17699 / DSM 428 / KCTC 22496 / NCIMB 10442 / H16 / Stanier 337) (Ralstonia eutropha).